A 1871-amino-acid chain; its full sequence is Callose synthase 4 (1871 aa).

Residues 1–491 (MNQPNRGQIL…FWHLFRSFDR (491 aa)) are Cytoplasmic-facing. A helical transmembrane segment spans residues 492–512 (MWSFYILSLQAMIIIAWNETS). Residues 513 to 521 (ESGGAVFHK) lie on the Extracellular side of the membrane. The helical transmembrane segment at 522–542 (VLSVFITAAKLNLFQAFLDIA) threads the bilayer. Topologically, residues 543–558 (LSWKARHSMSTHVRQR) are cytoplasmic. Residues 559-579 (YIFKAVAAAVWVLLMPLTYAY) form a helical membrane-spanning segment. Residues 580–583 (SHTS) are Extracellular-facing. A helical transmembrane segment spans residues 584–604 (IFIVAILIYLSPNMLPEMLLL). Residues 605 to 640 (IPSIRRTLEKSDFRPVKLIMWWSQPELYIGRGMHES) lie on the Cytoplasmic side of the membrane. Residues 641 to 661 (AWSIYKYMMFWIVLLTSKLAF) traverse the membrane as a helical segment. Over 662 to 701 (SYYVEQIKPLMGPTKEIMSVPMPGYWLPEFFPHVKNNRGV) the chain is Extracellular. A helical membrane pass occupies residues 702–724 (VITLWSPVILVYFMDTQIWYAIV). Over 725–1441 (STLVGGLYGA…FDFFRMLSCY (717 aa)) the chain is Cytoplasmic. A helical transmembrane segment spans residues 1442–1462 (FTTVGFYFCSMLTVLTVYVFL). The Extracellular portion of the chain corresponds to 1463–1485 (YGRLYLVLSGVEKELGNKPMMME). Residues 1486–1506 (IILASQSFVQIVFLMAMPMIM) form a helical membrane-spanning segment. At 1507 to 1516 (EIGLERGFYD) the chain is on the cytoplasmic side. A helical transmembrane segment spans residues 1517-1537 (ALFDFVLMQLQLASVFFTFQL). Residues 1538–1580 (GTKFHYYCKTLLHGGAEYRGTGRGFVVFHAKFAENYRFYSRSH) are Extracellular-facing. 2 helical membrane passes run 1581 to 1601 (FVKA…GPTY) and 1602 to 1622 (IGLF…APFL). The Extracellular segment spans residues 1623 to 1675 (FNPSGFEWHEIVEDWADWKKWIEYDNGGIGVPPEKSWESWWEKDIEHLQHSGK). A helical membrane pass occupies residues 1676–1696 (WGIVVEIFFALRFFIFQYGLV). At 1697–1708 (YQLSAFKNKYSS) the chain is on the cytoplasmic side. A helical transmembrane segment spans residues 1709-1729 (LWVFGASWLLILILLLTVTVL). Over 1730 to 1741 (DYARRRLGTEFQ) the chain is Extracellular. The helical transmembrane segment at 1742–1762 (LLFRIIKVSLFLAFMAIFITL) threads the bilayer. Residues 1763-1772 (MTCRLILPQD) lie on the Cytoplasmic side of the membrane. Residues 1773–1793 (VFLCMLALIPTGWGLLLIAQS) traverse the membrane as a helical segment. The Extracellular segment spans residues 1794-1815 (CKPLIQQPGIWSWVMTLAWVYD). A helical transmembrane segment spans residues 1816–1836 (LVMGSLLFIPIAFMAWFPFIS). The Cytoplasmic segment spans residues 1837–1871 (EFQTRMLFNQAFSRGLHISRILSGQRKHRSSKNKD).

The protein belongs to the glycosyltransferase 48 family.

It is found in the cell membrane. The enzyme catalyses [(1-&gt;3)-beta-D-glucosyl](n) + UDP-alpha-D-glucose = [(1-&gt;3)-beta-D-glucosyl](n+1) + UDP + H(+). Involved in callose synthesis at the forming cell plate during cytokinesis. During plant growth and development, callose is found as a transitory component of the cell plate in dividing cells, is a major component of pollen mother cell walls and pollen tubes, and is found as a structural component of plasmodesmatal canals. This is Callose synthase 4 (CALS4) from Arabidopsis thaliana (Mouse-ear cress).